We begin with the raw amino-acid sequence, 991 residues long: Mediator of RNA polymerase II transcription subunit 5 (991 aa).

The protein belongs to the Mediator complex subunit 5 family. As to quaternary structure, component of the Mediator complex.

It localises to the nucleus. Functionally, component of the Mediator complex, a coactivator involved in the regulated transcription of nearly all RNA polymerase II-dependent genes. Mediator functions as a bridge to convey information from gene-specific regulatory proteins to the basal RNA polymerase II transcription machinery. Mediator is recruited to promoters by direct interactions with regulatory proteins and serves as a scaffold for the assembly of a functional preinitiation complex with RNA polymerase II and the general transcription factors. The protein is Mediator of RNA polymerase II transcription subunit 5 (NUT1) of Yarrowia lipolytica (strain CLIB 122 / E 150) (Yeast).